A 113-amino-acid chain; its full sequence is T cell receptor alpha variable 13-2 (113 aa).

The signal sequence occupies residues M1–G21. An Ig-like domain is found at E22–N113. Cysteines 43 and 110 form a disulfide. N-linked (GlcNAc...) asparagine glycosylation occurs at N87.

As to quaternary structure, alpha-beta TR is a heterodimer composed of an alpha and beta chain; disulfide-linked. The alpha-beta TR is associated with the transmembrane signaling CD3 coreceptor proteins to form the TR-CD3 (TcR or TCR). The assembly of alpha-beta TR heterodimers with CD3 occurs in the endoplasmic reticulum where a single alpha-beta TR heterodimer associates with one CD3D-CD3E heterodimer, one CD3G-CD3E heterodimer and one CD247 homodimer forming a stable octameric structure. CD3D-CD3E and CD3G-CD3E heterodimers preferentially associate with TR alpha and TR beta chains, respectively. The association of the CD247 homodimer is the last step of TcR assembly in the endoplasmic reticulum and is required for transport to the cell surface.

The protein localises to the cell membrane. Its function is as follows. V region of the variable domain of T cell receptor (TR) alpha chain that participates in the antigen recognition. Alpha-beta T cell receptors are antigen specific receptors which are essential to the immune response and are present on the cell surface of T lymphocytes. Recognize peptide-major histocompatibility (MH) (pMH) complexes that are displayed by antigen presenting cells (APC), a prerequisite for efficient T cell adaptive immunity against pathogens. Binding of alpha-beta TR to pMH complex initiates TR-CD3 clustering on the cell surface and intracellular activation of LCK that phosphorylates the ITAM motifs of CD3G, CD3D, CD3E and CD247 enabling the recruitment of ZAP70. In turn ZAP70 phosphorylates LAT, which recruits numerous signaling molecules to form the LAT signalosome. The LAT signalosome propagates signal branching to three major signaling pathways, the calcium, the mitogen-activated protein kinase (MAPK) kinase and the nuclear factor NF-kappa-B (NF-kB) pathways, leading to the mobilization of transcription factors that are critical for gene expression and essential for T cell growth and differentiation. The T cell repertoire is generated in the thymus, by V-(D)-J rearrangement. This repertoire is then shaped by intrathymic selection events to generate a peripheral T cell pool of self-MH restricted, non-autoaggressive T cells. Post-thymic interaction of alpha-beta TR with the pMH complexes shapes TR structural and functional avidity. The sequence is that of T cell receptor alpha variable 13-2 from Homo sapiens (Human).